The following is a 206-amino-acid chain: Ribosomal RNA large subunit methyltransferase E (206 aa).

S-adenosyl-L-methionine contacts are provided by Gly-60, Trp-62, Asp-80, Asp-96, and Asp-121. Lys-161 (proton acceptor) is an active-site residue.

Belongs to the class I-like SAM-binding methyltransferase superfamily. RNA methyltransferase RlmE family.

The protein localises to the cytoplasm. The catalysed reaction is uridine(2552) in 23S rRNA + S-adenosyl-L-methionine = 2'-O-methyluridine(2552) in 23S rRNA + S-adenosyl-L-homocysteine + H(+). Functionally, specifically methylates the uridine in position 2552 of 23S rRNA at the 2'-O position of the ribose in the fully assembled 50S ribosomal subunit. The protein is Ribosomal RNA large subunit methyltransferase E of Hydrogenovibrio crunogenus (strain DSM 25203 / XCL-2) (Thiomicrospira crunogena).